Reading from the N-terminus, the 87-residue chain is U14-lycotoxin-Ls1b (87 aa).

Residues 1-20 (MNSKVFVVLLLLALSTCVLS) form the signal peptide. The WAP domain maps to 21 to 66 (EKYCPTPRNTSCKKMNIRNNCCRDSDCTSNAFCCAEPCGNFCHKAS). Intrachain disulfides connect cysteine 24-cysteine 54, cysteine 32-cysteine 58, cysteine 41-cysteine 53, cysteine 42-cysteine 80, and cysteine 47-cysteine 62.

It belongs to the venom protein 11 family. 01 (wap-1) subfamily. In terms of processing, contains 5 disulfide bonds. As to expression, expressed by the venom gland.

Its subcellular location is the secreted. In terms of biological role, has antibacterial activity. In Lycosa singoriensis (Wolf spider), this protein is U14-lycotoxin-Ls1b.